Consider the following 134-residue polypeptide: Large ribosomal subunit protein uL16c (134 aa).

It belongs to the universal ribosomal protein uL16 family. In terms of assembly, part of the 50S ribosomal subunit.

The protein resides in the plastid. It is found in the chloroplast. This is Large ribosomal subunit protein uL16c from Gnetum parvifolium (Small-leaved jointfir).